The chain runs to 384 residues: Chorismate synthase (384 aa).

NADP(+) contacts are provided by Arg-40 and Arg-46. FMN is bound by residues 127–129, 247–248, Ala-292, 307–311, and Arg-333; these read RTS, QA, and KPIPT.

It belongs to the chorismate synthase family. Homotetramer. FMNH2 serves as cofactor.

It carries out the reaction 5-O-(1-carboxyvinyl)-3-phosphoshikimate = chorismate + phosphate. Its pathway is metabolic intermediate biosynthesis; chorismate biosynthesis; chorismate from D-erythrose 4-phosphate and phosphoenolpyruvate: step 7/7. Functionally, catalyzes the anti-1,4-elimination of the C-3 phosphate and the C-6 proR hydrogen from 5-enolpyruvylshikimate-3-phosphate (EPSP) to yield chorismate, which is the branch point compound that serves as the starting substrate for the three terminal pathways of aromatic amino acid biosynthesis. This reaction introduces a second double bond into the aromatic ring system. This is Chorismate synthase from Alkaliphilus oremlandii (strain OhILAs) (Clostridium oremlandii (strain OhILAs)).